The primary structure comprises 790 residues: Penicillin-binding protein 1A (790 aa).

The Cytoplasmic portion of the chain corresponds to 1 to 20; that stretch reads MANVRKRRKKKNEHKALRLT. The helical; Signal-anchor for type II membrane protein transmembrane segment at 21 to 41 threads the bilayer; it reads FITLLMVFLFSCVAAAGVGLA. The Extracellular segment spans residues 42–790; that stretch reads MIKAAPPLDV…RKRKMIKPQI (749 aa). The segment at 61 to 230 is transglycosylase; the sequence is SVIYDDKNKL…PQSPSTFYNA (170 aa). Glutamate 100 functions as the Proton donor; for transglycosylase activity in the catalytic mechanism. Residues 363–656 are transpeptidase; sequence ASVSIVDYKT…AALIWKLIMG (294 aa). Serine 402 serves as the catalytic Acyl-ester intermediate; for transpeptidase activity. A disordered region spans residues 720-790; it reads NKDKDDDDDD…RKRKMIKPQI (71 aa). Positions 724-740 are enriched in acidic residues; that stretch reads DDDDDDKDKDKEDEEEN. Residues 741 to 779 are compositionally biased toward basic and acidic residues; that stretch reads KDEKNEDKKEAKDNTKNKDKDKKKDNDRKIDMDKKPDSS. The span at 780-790 shows a compositional bias: basic residues; it reads KRKRKMIKPQI.

In the N-terminal section; belongs to the glycosyltransferase 51 family. The protein in the C-terminal section; belongs to the transpeptidase family.

The protein localises to the cell membrane. It carries out the reaction [GlcNAc-(1-&gt;4)-Mur2Ac(oyl-L-Ala-gamma-D-Glu-L-Lys-D-Ala-D-Ala)](n)-di-trans,octa-cis-undecaprenyl diphosphate + beta-D-GlcNAc-(1-&gt;4)-Mur2Ac(oyl-L-Ala-gamma-D-Glu-L-Lys-D-Ala-D-Ala)-di-trans,octa-cis-undecaprenyl diphosphate = [GlcNAc-(1-&gt;4)-Mur2Ac(oyl-L-Ala-gamma-D-Glu-L-Lys-D-Ala-D-Ala)](n+1)-di-trans,octa-cis-undecaprenyl diphosphate + di-trans,octa-cis-undecaprenyl diphosphate + H(+). The enzyme catalyses Preferential cleavage: (Ac)2-L-Lys-D-Ala-|-D-Ala. Also transpeptidation of peptidyl-alanyl moieties that are N-acyl substituents of D-alanine.. Its pathway is cell wall biogenesis; peptidoglycan biosynthesis. In terms of biological role, cell wall formation. Synthesis of cross-linked peptidoglycan from the lipid intermediates. The enzyme has a penicillin-insensitive transglycosylase N-terminal domain (formation of linear glycan strands) and a penicillin-sensitive transpeptidase C-terminal domain (cross-linking of the peptide subunits). The polypeptide is Penicillin-binding protein 1A (pbpA) (Clostridium tetani (strain Massachusetts / E88)).